A 642-amino-acid chain; its full sequence is 1-deoxy-D-xylulose-5-phosphate synthase (642 aa).

Thiamine diphosphate is bound by residues H79 and G120–S122. D151 contacts Mg(2+). Thiamine diphosphate-binding positions include G152 to S153, N180, Y290, and E372. N180 is a binding site for Mg(2+).

The protein belongs to the transketolase family. DXPS subfamily. In terms of assembly, homodimer. It depends on Mg(2+) as a cofactor. Thiamine diphosphate is required as a cofactor.

The enzyme catalyses D-glyceraldehyde 3-phosphate + pyruvate + H(+) = 1-deoxy-D-xylulose 5-phosphate + CO2. Its pathway is metabolic intermediate biosynthesis; 1-deoxy-D-xylulose 5-phosphate biosynthesis; 1-deoxy-D-xylulose 5-phosphate from D-glyceraldehyde 3-phosphate and pyruvate: step 1/1. Its function is as follows. Catalyzes the acyloin condensation reaction between C atoms 2 and 3 of pyruvate and glyceraldehyde 3-phosphate to yield 1-deoxy-D-xylulose-5-phosphate (DXP). The sequence is that of 1-deoxy-D-xylulose-5-phosphate synthase from Rhodospirillum centenum (strain ATCC 51521 / SW).